A 323-amino-acid polypeptide reads, in one-letter code: Secreted frizzled-related protein 3 (323 aa).

An N-terminal signal peptide occupies residues 1 to 32; that stretch reads MVCCGPGRMLLGWAGLLVLAALCLLQVPGAQA. In terms of domain architecture, FZ spans 33–150; the sequence is AACEPVRIPL…VYDRGVCISP (118 aa). 5 disulfides stabilise this stretch: cysteine 35–cysteine 96, cysteine 43–cysteine 89, cysteine 80–cysteine 119, cysteine 108–cysteine 147, and cysteine 112–cysteine 136. Asparagine 49 carries an N-linked (GlcNAc...) asparagine glycan. The 121-residue stretch at 178–298 folds into the NTR domain; that stretch reads CKCKPVRATQ…WDMKLRHLGL (121 aa). Residues 299-323 are disordered; that stretch reads GKTDASDSTQNQKSGRNSNPRPARS. Residues 304–323 show a composition bias toward polar residues; the sequence is SDSTQNQKSGRNSNPRPARS.

It belongs to the secreted frizzled-related protein (sFRP) family. Interacts with MYOC. Expressed in kidney, brain, testis. Weak expression in spleen and heart.

The protein localises to the secreted. Functionally, soluble frizzled-related proteins (sFRPS) function as modulators of Wnt signaling through direct interaction with Wnts. They have a role in regulating cell growth and differentiation in specific cell types. SFRP3/FRZB appears to be involved in limb skeletogenesis. Antagonist of Wnt8 signaling. Regulates chondrocyte maturation and long bone development. The polypeptide is Secreted frizzled-related protein 3 (Frzb) (Mus musculus (Mouse)).